The chain runs to 302 residues: D-alanine--D-alanine ligase B (302 aa).

One can recognise an ATP-grasp domain in the interval lysine 99 to glutamate 294. Isoleucine 126 to threonine 181 contributes to the ATP binding site. Mg(2+)-binding residues include aspartate 248, glutamate 261, and asparagine 263.

This sequence belongs to the D-alanine--D-alanine ligase family. The cofactor is Mg(2+). Mn(2+) is required as a cofactor.

Its subcellular location is the cytoplasm. It carries out the reaction 2 D-alanine + ATP = D-alanyl-D-alanine + ADP + phosphate + H(+). Its pathway is cell wall biogenesis; peptidoglycan biosynthesis. Its function is as follows. Cell wall formation. This is D-alanine--D-alanine ligase B from Clostridium perfringens (strain 13 / Type A).